We begin with the raw amino-acid sequence, 92 residues long: Small ribosomal subunit protein uS17 (92 aa).

This sequence belongs to the universal ribosomal protein uS17 family. Part of the 30S ribosomal subunit.

One of the primary rRNA binding proteins, it binds specifically to the 5'-end of 16S ribosomal RNA. This Wigglesworthia glossinidia brevipalpis protein is Small ribosomal subunit protein uS17.